The chain runs to 632 residues: Probable potassium transport system protein Kup (632 aa).

The next 12 membrane-spanning stretches (helical) occupy residues leucine 20–leucine 40, isoleucine 60–isoleucine 80, leucine 111–proline 131, phenylalanine 146–leucine 166, leucine 178–isoleucine 198, phenylalanine 216–threonine 236, tryptophan 257–leucine 277, leucine 289–isoleucine 309, isoleucine 347–phenylalanine 367, valine 379–leucine 399, proline 404–alanine 424, and isoleucine 429–threonine 449.

This sequence belongs to the HAK/KUP transporter (TC 2.A.72) family.

It localises to the cell inner membrane. The enzyme catalyses K(+)(in) + H(+)(in) = K(+)(out) + H(+)(out). Functionally, transport of potassium into the cell. Likely operates as a K(+):H(+) symporter. The polypeptide is Probable potassium transport system protein Kup (Pseudomonas putida (strain W619)).